The chain runs to 79 residues: D-alanyl carrier protein (79 aa).

In terms of domain architecture, Carrier spans 1-77 (MDVKETILNI…KIISGVVELM (77 aa)). The residue at position 35 (S35) is an O-(pantetheine 4'-phosphoryl)serine.

This sequence belongs to the DltC family. Post-translationally, 4'-phosphopantetheine is transferred from CoA to a specific serine of apo-DCP.

It localises to the cytoplasm. Its pathway is cell wall biogenesis; lipoteichoic acid biosynthesis. Its function is as follows. Carrier protein involved in the D-alanylation of lipoteichoic acid (LTA). The loading of thioester-linked D-alanine onto DltC is catalyzed by D-alanine--D-alanyl carrier protein ligase DltA. The DltC-carried D-alanyl group is further transferred to cell membrane phosphatidylglycerol (PG) by forming an ester bond, probably catalyzed by DltD. D-alanylation of LTA plays an important role in modulating the properties of the cell wall in Gram-positive bacteria, influencing the net charge of the cell wall. This Streptococcus suis (strain 98HAH33) protein is D-alanyl carrier protein.